We begin with the raw amino-acid sequence, 40 residues long: Snaclec tokaracetin subunit beta (40 aa).

The cysteines at positions 2 and 13 are disulfide-linked. The 32-residue stretch at 9–40 (YDEHCYRVFQQKMNWEDAEKFCTQQHKGXHLX) folds into the C-type lectin domain.

The protein belongs to the snaclec family. In terms of assembly, heterodimer of subunits alpha and beta; disulfide-linked. In terms of tissue distribution, expressed by the venom gland.

The protein resides in the secreted. Functionally, platelet antagonist that specifically and reversibly binds to a site on platelet glycoprotein Ibalpha (GP1BA) close to or identical with the site for vWF binding. It inhibits the binding of vWF to platelets and vWF-dependent shear-induced platelet aggregation. The sequence is that of Snaclec tokaracetin subunit beta from Protobothrops tokarensis (Tokara habu).